Here is a 162-residue protein sequence, read N- to C-terminus: MDNLNINFINDDEHPIPSQDLLLKCLQLVADKHHISHAEVNLNIVSNDEIQQINKQFRNKDKPTNIISFKFEKPQGLPDDIANDFLGDIVIAPAVLENEAKEQNKELNDHWQHIFIHGLLHLLGYNHQDDQEAEVMENLEIQLLAQLGIANPYIEQENQNGR.

Histidine 117, histidine 121, and histidine 127 together coordinate Zn(2+).

The protein belongs to the endoribonuclease YbeY family. The cofactor is Zn(2+).

Its subcellular location is the cytoplasm. Single strand-specific metallo-endoribonuclease involved in late-stage 70S ribosome quality control and in maturation of the 3' terminus of the 16S rRNA. The sequence is that of Endoribonuclease YbeY from Francisella tularensis subsp. tularensis (strain WY96-3418).